The sequence spans 436 residues: F-box protein SKIP16 (436 aa).

The region spanning Arg-75–Leu-111 is the F-box; degenerate domain. An ApaG domain is found at Val-295–Phe-436.

In terms of assembly, part of a SCF (ASK-cullin-F-box) protein ligase complex. Interacts with SKP1A/ASK1, SKP1B/ASK2, ASK4, ASK11 and ASK13.

Its pathway is protein modification; protein ubiquitination. In terms of biological role, component of SCF(ASK-cullin-F-box) E3 ubiquitin ligase complexes, which may mediate the ubiquitination and subsequent proteasomal degradation of target proteins. This Arabidopsis thaliana (Mouse-ear cress) protein is F-box protein SKIP16 (SKIP16).